The following is a 336-amino-acid chain: Eukaryotic translation initiation factor 3 subunit H (336 aa).

In terms of domain architecture, MPN spans 21 to 154 (VQCDGLAAMK…LKAYRLTPQA (134 aa)).

Belongs to the eIF-3 subunit H family. Component of the eukaryotic translation initiation factor 3 (eIF-3) complex.

The protein resides in the cytoplasm. In terms of biological role, component of the eukaryotic translation initiation factor 3 (eIF-3) complex, which is involved in protein synthesis of a specialized repertoire of mRNAs and, together with other initiation factors, stimulates binding of mRNA and methionyl-tRNAi to the 40S ribosome. The eIF-3 complex specifically targets and initiates translation of a subset of mRNAs involved in cell proliferation. The polypeptide is Eukaryotic translation initiation factor 3 subunit H (Culex quinquefasciatus (Southern house mosquito)).